A 91-amino-acid polypeptide reads, in one-letter code: Small ribosomal subunit protein uS19 (91 aa).

This sequence belongs to the universal ribosomal protein uS19 family.

Its function is as follows. Protein S19 forms a complex with S13 that binds strongly to the 16S ribosomal RNA. The sequence is that of Small ribosomal subunit protein uS19 from Ralstonia pickettii (strain 12J).